We begin with the raw amino-acid sequence, 104 residues long: Flagellar hook-basal body complex protein FliE (104 aa).

The protein belongs to the FliE family.

It is found in the bacterial flagellum basal body. This is Flagellar hook-basal body complex protein FliE from Escherichia coli (strain 55989 / EAEC).